Consider the following 300-residue polypeptide: Type 1 fimbrin D-mannose specific adhesin (300 aa).

The N-terminal stretch at 1–21 is a signal peptide; sequence MKRVITLFAVLLMGWSVNAWS.

It belongs to the fimbrial protein family.

It localises to the fimbrium. Involved in regulation of length and mediation of adhesion of type 1 fimbriae (but not necessary for the production of fimbriae). Adhesin responsible for the binding to D-mannose. It is laterally positioned at intervals in the structure of the type 1 fimbriae. In order to integrate FimH in the fimbriae FimF and FimG are needed. The polypeptide is Type 1 fimbrin D-mannose specific adhesin (fimH) (Escherichia coli (strain K12)).